Consider the following 289-residue polypeptide: Serine/threonine-protein phosphatase Pgam5, mitochondrial (289 aa).

It belongs to the phosphoglycerate mutase family. BPG-dependent PGAM subfamily. As to quaternary structure, interacts with Pk92B/ASK1.

It localises to the mitochondrion outer membrane. It carries out the reaction O-phospho-L-seryl-[protein] + H2O = L-seryl-[protein] + phosphate. The catalysed reaction is O-phospho-L-threonyl-[protein] + H2O = L-threonyl-[protein] + phosphate. Functionally, displays phosphatase activity for serine/threonine residues, and dephosphorylates and activates Pk92B kinase. Has apparently no phosphoglycerate mutase activity. This is Serine/threonine-protein phosphatase Pgam5, mitochondrial from Drosophila yakuba (Fruit fly).